The sequence spans 470 residues: Chromosomal replication initiator protein DnaA (470 aa).

Positions 1 to 89 (MIESNHVVLW…YNVMVDKTSI (89 aa)) are domain I, interacts with DnaA modulators. Residues 89 to 130 (IPNQTVNLEASNRSTAVTPKSIVGGNKAPSFLKAPAVQDLDP) form a domain II region. The tract at residues 131–348 (HLNPNYNFEN…GIVIAIMARS (218 aa)) is domain III, AAA+ region. Gly-176, Gly-178, Lys-179, and Thr-180 together coordinate ATP. The domain IV, binds dsDNA stretch occupies residues 349–470 (TIFNKEIDLD…EIESLLKKKA (122 aa)).

It belongs to the DnaA family. Oligomerizes as a right-handed, spiral filament on DNA at oriC.

It localises to the cytoplasm. In terms of biological role, plays an essential role in the initiation and regulation of chromosomal replication. ATP-DnaA binds to the origin of replication (oriC) to initiate formation of the DNA replication initiation complex once per cell cycle. Binds the DnaA box (a 9 base pair repeat at the origin) and separates the double-stranded (ds)DNA. Forms a right-handed helical filament on oriC DNA; dsDNA binds to the exterior of the filament while single-stranded (ss)DNA is stabiized in the filament's interior. The ATP-DnaA-oriC complex binds and stabilizes one strand of the AT-rich DNA unwinding element (DUE), permitting loading of DNA polymerase. After initiation quickly degrades to an ADP-DnaA complex that is not apt for DNA replication. Binds acidic phospholipids. This chain is Chromosomal replication initiator protein DnaA, found in Bacteroides thetaiotaomicron (strain ATCC 29148 / DSM 2079 / JCM 5827 / CCUG 10774 / NCTC 10582 / VPI-5482 / E50).